A 157-amino-acid chain; its full sequence is Putative dehydration-responsive element-binding protein 2H (157 aa).

The Nuclear localization signal signature appears at R5 to R21. A disordered region spans residues A29 to K57. A compositionally biased stretch (basic residues) spans P40–M54. The AP2/ERF DNA-binding region spans D66–P123.

Belongs to the AP2/ERF transcription factor family. ERF subfamily.

It localises to the nucleus. In terms of biological role, putative transcriptional activator that binds specifically to the DNA sequence 5'-[AG]CCGAC-3'. The protein is Putative dehydration-responsive element-binding protein 2H (DREB2H) of Arabidopsis thaliana (Mouse-ear cress).